A 318-amino-acid chain; its full sequence is Transcriptional regulator NovG (318 aa).

Residues 146 to 156 (VASLRSSSTAG) are compositionally biased toward polar residues. Positions 146–176 (VASLRSSSTAGTVGRRTGQDGRSRPNDGTDG) are disordered. The segment covering 162–176 (TGQDGRSRPNDGTDG) has biased composition (basic and acidic residues).

The protein belongs to the ParB family.

Its function is as follows. Transcription regulator that specifically activates expression of genes involved in the novobiocin biosynthesis pathway. Binds 5'-GTTCRACTG(N)(11)CRGTYGAAC-3' DNA sequence. The sequence is that of Transcriptional regulator NovG (novG) from Streptomyces niveus (Streptomyces spheroides).